The following is a 224-amino-acid chain: Retinoschisin (224 aa).

A signal peptide spans 1–23; sequence MPHKIEGFFLLLLFGYEATLGLS. The 157-residue stretch at 63-219 folds into the F5/8 type C domain; it reads CPYHKPLGFE…IAIRMELLEC (157 aa). Intrachain disulfides connect Cys63–Cys219 and Cys110–Cys142.

As to quaternary structure, homooctamer of 4 homodimers; disulfide-linked. The homooctamer has a flat, cogwheel structure with a diameter of about 14 nm. Two stacked octamers can assemble to form a hexadecamer. Detected in the eye cup. Detected in retina, in the inner segment of the photoreceptors, the inner nuclear layer, the inner plexiform layer and the ganglion cell layer (at protein level). Restricted to the retina. At the mRNA level, detected only within the photoreceptor cell layer, most prominently within the inner segments of the photoreceptors. Undetectable in the inner plexiform layers and the inner nuclear layer.

It is found in the secreted. It localises to the cell membrane. Its function is as follows. Binds negatively charged membrane lipids, such as phosphatidylserine and phosphoinositides. May play a role in cell-cell adhesion processes in the retina, via homomeric interaction between octamers present on the surface of two neighboring cells. Required for normal structure and function of the retina. The sequence is that of Retinoschisin (Rs1) from Mus musculus (Mouse).